The primary structure comprises 146 residues: Large ribosomal subunit protein uL22 (146 aa).

Positions M1–L39 are disordered.

It belongs to the universal ribosomal protein uL22 family. In terms of assembly, part of the 50S ribosomal subunit.

In terms of biological role, this protein binds specifically to 23S rRNA; its binding is stimulated by other ribosomal proteins, e.g. L4, L17, and L20. It is important during the early stages of 50S assembly. It makes multiple contacts with different domains of the 23S rRNA in the assembled 50S subunit and ribosome. Its function is as follows. The globular domain of the protein is located near the polypeptide exit tunnel on the outside of the subunit, while an extended beta-hairpin is found that lines the wall of the exit tunnel in the center of the 70S ribosome. This chain is Large ribosomal subunit protein uL22, found in Anaeromyxobacter dehalogenans (strain 2CP-1 / ATCC BAA-258).